The following is a 141-amino-acid chain: Cytochrome b-c1 complex subunit 6, mitochondrial (141 aa).

Over residues 18-37 the composition is skewed to low complexity; sequence ATVEAEAPADTPAETAPASE. Residues 18 to 94 form a disordered region; the sequence is ATVEAEAPAD…ECRNSKECAP (77 aa). Over residues 56 to 75 the composition is skewed to acidic residues; the sequence is EEPEEEAEEEEEEEEDEDEI. A compositionally biased stretch (basic and acidic residues) spans 76–94; that stretch reads VDPKETLEEECRNSKECAP. A disulfide bridge connects residues Cys102 and Cys117.

The protein belongs to the UQCRH/QCR6 family. In terms of assembly, component of the ubiquinol-cytochrome c oxidoreductase (cytochrome b-c1 complex, complex III, CIII), a multisubunit enzyme composed of 10 subunits. The complex is composed of 3 respiratory subunits cytochrome b (cob), cytochrome c1 (cyt-1) and Rieske protein (fes-1), 2 core protein subunits pep and ucr-1, and 5 low-molecular weight protein subunits qcr6, qcr7, qcr8, qcr9 and probably NCU16844/qcr10. The complex exists as an obligatory dimer and forms supercomplexes (SCs) in the inner mitochondrial membrane with NADH-ubiquinone oxidoreductase (complex I, CI) and cytochrome c oxidase (complex IV, CIV), resulting in different assemblies (supercomplexes SCI(1)III(2), SCIII(2)IV(1) and SCIII(2)IV(2) as well as higher order I(x)III(y)IV(z) megacomplexes).

The protein resides in the mitochondrion inner membrane. Functionally, component of the ubiquinol-cytochrome c oxidoreductase, a multisubunit transmembrane complex that is part of the mitochondrial electron transport chain which drives oxidative phosphorylation. The respiratory chain contains 3 multisubunit complexes succinate dehydrogenase (complex II, CII), ubiquinol-cytochrome c oxidoreductase (cytochrome b-c1 complex, complex III, CIII) and cytochrome c oxidase (complex IV, CIV), that cooperate to transfer electrons derived from NADH and succinate to molecular oxygen, creating an electrochemical gradient over the inner membrane that drives transmembrane transport and the ATP synthase. The cytochrome b-c1 complex catalyzes electron transfer from ubiquinol to cytochrome c, linking this redox reaction to translocation of protons across the mitochondrial inner membrane, with protons being carried across the membrane as hydrogens on the quinol. In the process called Q cycle, 2 protons are consumed from the matrix, 4 protons are released into the intermembrane space and 2 electrons are passed to cytochrome c. The protein is Cytochrome b-c1 complex subunit 6, mitochondrial (qcr6) of Neurospora crassa (strain ATCC 24698 / 74-OR23-1A / CBS 708.71 / DSM 1257 / FGSC 987).